We begin with the raw amino-acid sequence, 620 residues long: Glutathione-regulated potassium-efflux system protein KefC (620 aa).

The Periplasmic segment spans residues 1 to 3 (MDS). The helical transmembrane segment at 4-24 (HTLVQALIYLGSAALIVPIAV) threads the bilayer. Position 25 (Arg-25) is a topological domain, cytoplasmic. A helical transmembrane segment spans residues 26–46 (LGLGSVLGYLIAGCIIGPWGL). The Periplasmic portion of the chain corresponds to 47 to 53 (RLVTDAE). A helical membrane pass occupies residues 54-74 (SILHFAEIGVVLMLFIIGLEL). Residues 75–89 (DPQRLWKLRAAVFGG) lie on the Cytoplasmic side of the membrane. Residues 90–110 (GALQMVICGGLLGLFCMLLGL) form a helical membrane-spanning segment. The Periplasmic segment spans residues 111-113 (RWQ). Residues 114–134 (VAELIGMTLALSSTAIAMQAM) form a helical membrane-spanning segment. At 135 to 148 (NERNLMVTQMGRSA) the chain is on the cytoplasmic side. Residues 149 to 169 (FAVLLFQDIAAIPLVAMIPLL) traverse the membrane as a helical segment. Over 170-177 (AASSASTT) the chain is Periplasmic. Residues 178–198 (MGAFALSALKVAGALVLVVLL) form a helical membrane-spanning segment. Residues 199-213 (GRYVTRPALRFVARS) lie on the Cytoplasmic side of the membrane. Residues 214–233 (GLREVFSAVALFLVFGFGLL) traverse the membrane as a helical segment. Topologically, residues 234–236 (LEE) are periplasmic. Residues 237 to 254 (VGLSMAMGAFLAGVLLAS) form a helical membrane-spanning segment. Residues 255-269 (SEYRHALESDIEPFK) are Cytoplasmic-facing. The helical transmembrane segment at 270 to 290 (GLLLGLFFIGVGMSIDFGTLI) threads the bilayer. At 291 to 293 (ENP) the chain is on the periplasmic side. Residues 294 to 314 (LRIVILLLGFLIIKIAMLWLI) traverse the membrane as a helical segment. Residues 315-326 (ARPLQVPNKQRR) are Cytoplasmic-facing. A helical transmembrane segment spans residues 327–347 (WFAVLLGQGSEFAFVVFGAAQ). The Periplasmic portion of the chain corresponds to 348 to 358 (MANVLEPEWAK). The helical transmembrane segment at 359-379 (SLTLAVALSMAATPILLVILN) threads the bilayer. The Cytoplasmic portion of the chain corresponds to 380–620 (RLEQSSTEEA…ADEPETKPSS (241 aa)). In terms of domain architecture, RCK N-terminal spans 399 to 518 (QPRVIIAGFG…AGVEKPERET (120 aa)). The tract at residues 597 to 620 (GWQGTEEGKHTGNMADEPETKPSS) is disordered.

It belongs to the monovalent cation:proton antiporter 2 (CPA2) transporter (TC 2.A.37) family. KefC subfamily. Homodimer. Interacts with the regulatory subunit KefF.

It is found in the cell inner membrane. Its function is as follows. Pore-forming subunit of a potassium efflux system that confers protection against electrophiles. Catalyzes K(+)/H(+) antiport. The protein is Glutathione-regulated potassium-efflux system protein KefC of Shigella flexneri.